Here is a 415-residue protein sequence, read N- to C-terminus: Gamma-glutamyl phosphate reductase (415 aa).

It belongs to the gamma-glutamyl phosphate reductase family.

The protein localises to the cytoplasm. It catalyses the reaction L-glutamate 5-semialdehyde + phosphate + NADP(+) = L-glutamyl 5-phosphate + NADPH + H(+). It participates in amino-acid biosynthesis; L-proline biosynthesis; L-glutamate 5-semialdehyde from L-glutamate: step 2/2. Its function is as follows. Catalyzes the NADPH-dependent reduction of L-glutamate 5-phosphate into L-glutamate 5-semialdehyde and phosphate. The product spontaneously undergoes cyclization to form 1-pyrroline-5-carboxylate. The chain is Gamma-glutamyl phosphate reductase from Clostridium perfringens (strain ATCC 13124 / DSM 756 / JCM 1290 / NCIMB 6125 / NCTC 8237 / Type A).